Consider the following 346-residue polypeptide: Cyclic GMP-AMP synthase-like protein (346 aa).

ATP contacts are provided by residues Ser-58 and 70–72 (EFD). The Mg(2+) site is built by Glu-70, Asp-72, and Asp-165. GTP is bound by residues Asp-165 and 212 to 219 (MVCAPHWE). Residues 216 to 219 (PHWE), Lys-237, and 252 to 256 (SYMLK) each bind ATP.

Belongs to the mab-21 family. Requires Mg(2+) as cofactor. Mn(2+) is required as a cofactor.

Activated in response of some unknown stimulus. Not activated in response to L-monocytogenes infection. Its function is as follows. Probable nucleotidyltransferase that catalyzes the formation of cyclic dinucleotide second messenger in response to some unknown stimulus. Does not catalyze the formation of cyclic GMP-AMP from ATP and GTP. This Drosophila melanogaster (Fruit fly) protein is Cyclic GMP-AMP synthase-like protein.